A 283-amino-acid polypeptide reads, in one-letter code: NAD kinase (283 aa).

Aspartate 66 functions as the Proton acceptor in the catalytic mechanism. NAD(+)-binding positions include 66–67 (DG), 140–141 (ND), arginine 151, lysine 168, aspartate 170, 181–186 (TGYCLS), and glutamine 240.

Belongs to the NAD kinase family. It depends on a divalent metal cation as a cofactor.

Its subcellular location is the cytoplasm. The enzyme catalyses NAD(+) + ATP = ADP + NADP(+) + H(+). Involved in the regulation of the intracellular balance of NAD and NADP, and is a key enzyme in the biosynthesis of NADP. Catalyzes specifically the phosphorylation on 2'-hydroxyl of the adenosine moiety of NAD to yield NADP. This is NAD kinase from Geobacter metallireducens (strain ATCC 53774 / DSM 7210 / GS-15).